The primary structure comprises 184 residues: Large ribosomal subunit protein uL6 (184 aa).

The protein belongs to the universal ribosomal protein uL6 family. In terms of assembly, part of the 50S ribosomal subunit.

In terms of biological role, this protein binds to the 23S rRNA, and is important in its secondary structure. It is located near the subunit interface in the base of the L7/L12 stalk, and near the tRNA binding site of the peptidyltransferase center. This is Large ribosomal subunit protein uL6 from Thermotoga maritima (strain ATCC 43589 / DSM 3109 / JCM 10099 / NBRC 100826 / MSB8).